The following is a 290-amino-acid chain: Glycine--tRNA ligase alpha subunit (290 aa).

The protein belongs to the class-II aminoacyl-tRNA synthetase family. Tetramer of two alpha and two beta subunits.

It localises to the cytoplasm. The enzyme catalyses tRNA(Gly) + glycine + ATP = glycyl-tRNA(Gly) + AMP + diphosphate. The protein is Glycine--tRNA ligase alpha subunit of Zymomonas mobilis subsp. mobilis (strain ATCC 31821 / ZM4 / CP4).